The following is a 341-amino-acid chain: Serine/threonine-protein kinase pdik1l (341 aa).

In terms of domain architecture, Protein kinase spans 8-332; the sequence is YELIQEVGRG…FELELRLVRI (325 aa). 14 to 22 contacts ATP; the sequence is VGRGSYGVV. D164 acts as the Proton acceptor in catalysis.

Belongs to the protein kinase superfamily. Ser/Thr protein kinase family.

Its subcellular location is the nucleus. It catalyses the reaction L-seryl-[protein] + ATP = O-phospho-L-seryl-[protein] + ADP + H(+). The enzyme catalyses L-threonyl-[protein] + ATP = O-phospho-L-threonyl-[protein] + ADP + H(+). This chain is Serine/threonine-protein kinase pdik1l (pdik1l), found in Danio rerio (Zebrafish).